The following is a 379-amino-acid chain: Sperm microtubule associated protein 2 (379 aa).

Residues 1–82 form a disordered region; it reads MGDSRRRSLG…EFPETLDPKE (82 aa). 2 stretches are compositionally biased toward basic and acidic residues: residues 19–29 and 38–50; these read GRSEREQDGDP and ESRR…RQDL. The segment covering 56-76 has biased composition (acidic residues); sequence GPEDPEEELPPEEVAGEEFPE. THEG repeat units lie at residues 118–137, 184–203, 222–241, 258–277, 290–309, and 326–345; these read KARK…PKIN, TITV…PKRF, SSLE…PKIR, AAQM…PKAP, PKPH…PKAQ, and VTKK…PKVR. Phosphoserine is present on Ser295. Residues 344-379 are disordered; that stretch reads VRKGLNEGYDRRPLASMSLPPPKASPEKCDQPRPGL. Basic and acidic residues-rich tracts occupy residues 347-356 and 368-379; these read GLNEGYDRRP and SPEKCDQPRPGL.

Interacts with CCT5. In terms of tissue distribution, testis specific.

The protein resides in the nucleus. Functionally, may be involved (but not essential) in spermatogenesis. In Homo sapiens (Human), this protein is Sperm microtubule associated protein 2.